A 160-amino-acid polypeptide reads, in one-letter code: MAIQPLRLDPITVLGKQLVIELFDCVDQRFDDIQWIEESMLEAARQANATIITSAFHKFSPIGISGVVVIAESHLAIHTWPEYGYAAVDVFTCGDVLDGAQAVRVLSERLGSRRHLISSMDRGLGGHRLGLLSRSLAGNGPVDEDSPTLRWALGQGTGVA.

The active-site Schiff-base intermediate with substrate; via pyruvic acid is Ser-73. Residue Ser-73 is modified to Pyruvic acid (Ser); by autocatalysis. The active-site Proton acceptor; for processing activity is His-78. The active-site Proton donor; for catalytic activity is the Cys-93.

This sequence belongs to the prokaryotic AdoMetDC family. Type 1 subfamily. As to quaternary structure, heterotetramer of two alpha and two beta chains arranged as a dimer of alpha/beta heterodimers. Pyruvate serves as cofactor. Post-translationally, is synthesized initially as an inactive proenzyme. Formation of the active enzyme involves a self-maturation process in which the active site pyruvoyl group is generated from an internal serine residue via an autocatalytic post-translational modification. Two non-identical subunits are generated from the proenzyme in this reaction, and the pyruvate is formed at the N-terminus of the alpha chain, which is derived from the carboxyl end of the proenzyme. The post-translation cleavage follows an unusual pathway, termed non-hydrolytic serinolysis, in which the side chain hydroxyl group of the serine supplies its oxygen atom to form the C-terminus of the beta chain, while the remainder of the serine residue undergoes an oxidative deamination to produce ammonia and the pyruvoyl group blocking the N-terminus of the alpha chain.

It carries out the reaction S-adenosyl-L-methionine + H(+) = S-adenosyl 3-(methylsulfanyl)propylamine + CO2. It participates in amine and polyamine biosynthesis; S-adenosylmethioninamine biosynthesis; S-adenosylmethioninamine from S-adenosyl-L-methionine: step 1/1. Its function is as follows. Catalyzes the decarboxylation of S-adenosylmethionine to S-adenosylmethioninamine (dcAdoMet), the propylamine donor required for the synthesis of the polyamines spermine and spermidine from the diamine putrescine. The protein is S-adenosylmethionine decarboxylase proenzyme of Pseudomonas aeruginosa (strain LESB58).